We begin with the raw amino-acid sequence, 712 residues long: Prion-like (glutamine/asparagine-rich) domain bearing protein pqn-59 (712 aa).

Basic and acidic residues-rich tracts occupy residues 79–92 and 125–141; these read EQKG…KPEE and RESR…KEGA. Disordered stretches follow at residues 79-172, 198-217, 228-265, 410-517, 594-624, and 659-712; these read EQKG…RAVA, TEVQ…TSSA, AAAH…SVAP, SRIM…QQHP, FNKF…ATNY, and AGGR…NWSN. The span at 156–165 shows a compositional bias: gly residues; the sequence is GRGGRGGARG. The segment covering 241–255 has biased composition (low complexity); the sequence is AQNPQPAAPPRRSLS. The span at 431-458 shows a compositional bias: polar residues; that stretch reads LKSTSPPLSYGQSNRGLSYDTSSASYQP. The segment covering 474-510 has biased composition (low complexity); the sequence is PTQQSAQQHQPQQQQQQAPQQPVQQQQQTPPAQSQPT. 2 stretches are compositionally biased toward polar residues: residues 597 to 612 and 683 to 696; these read FGSQ…QASN and AAQQ…QHNG.

This sequence belongs to the Ubiquitin-associated-like family.

Its subcellular location is the cytoplasm. It localises to the stress granule. In terms of biological role, antagonises the activities of multiple heterochronic microRNAs such as lin-4 and let-7 miRNAs. Modulates gene expression and cell fate specification during development. Plays a role in, but not strictly required for, the formation of stress granules. May be involved in protein translation and reducing the expression of mature microRNAs. The sequence is that of Prion-like (glutamine/asparagine-rich) domain bearing protein pqn-59 from Caenorhabditis elegans.